The following is a 272-amino-acid chain: Formamidopyrimidine-DNA glycosylase (272 aa).

The Schiff-base intermediate with DNA role is filled by Pro2. Glu3 serves as the catalytic Proton donor. Lys58 (proton donor; for beta-elimination activity) is an active-site residue. Positions 94, 112, and 153 each coordinate DNA. The FPG-type zinc finger occupies 238-272; the sequence is FVYDRAGEPCRVCGAPIRQIVQGQRSTYFCPNCQR. Catalysis depends on Arg262, which acts as the Proton donor; for delta-elimination activity.

This sequence belongs to the FPG family. As to quaternary structure, monomer. Zn(2+) serves as cofactor.

The enzyme catalyses Hydrolysis of DNA containing ring-opened 7-methylguanine residues, releasing 2,6-diamino-4-hydroxy-5-(N-methyl)formamidopyrimidine.. It catalyses the reaction 2'-deoxyribonucleotide-(2'-deoxyribose 5'-phosphate)-2'-deoxyribonucleotide-DNA = a 3'-end 2'-deoxyribonucleotide-(2,3-dehydro-2,3-deoxyribose 5'-phosphate)-DNA + a 5'-end 5'-phospho-2'-deoxyribonucleoside-DNA + H(+). Its function is as follows. Involved in base excision repair of DNA damaged by oxidation or by mutagenic agents. Acts as a DNA glycosylase that recognizes and removes damaged bases. Has a preference for oxidized purines, such as 7,8-dihydro-8-oxoguanine (8-oxoG). Has AP (apurinic/apyrimidinic) lyase activity and introduces nicks in the DNA strand. Cleaves the DNA backbone by beta-delta elimination to generate a single-strand break at the site of the removed base with both 3'- and 5'-phosphates. In Burkholderia mallei (strain NCTC 10229), this protein is Formamidopyrimidine-DNA glycosylase.